The sequence spans 317 residues: L-lactate dehydrogenase 2 (317 aa).

NAD(+) is bound by residues valine 16, aspartate 37, lysine 42, tyrosine 68, and glycine 82–alanine 83. Substrate contacts are provided by glutamine 85 and arginine 91. NAD(+)-binding positions include threonine 104, alanine 121–asparagine 123, and threonine 146. A substrate-binding site is contributed by asparagine 123–aspartate 126. Aspartate 151–arginine 154 provides a ligand contact to substrate. Residues arginine 156 and histidine 171 each coordinate beta-D-fructose 1,6-bisphosphate. Histidine 178 functions as the Proton acceptor in the catalytic mechanism. A Phosphotyrosine modification is found at tyrosine 223. A substrate-binding site is contributed by threonine 232.

Belongs to the LDH/MDH superfamily. LDH family. Homotetramer.

Its subcellular location is the cytoplasm. The enzyme catalyses (S)-lactate + NAD(+) = pyruvate + NADH + H(+). It functions in the pathway fermentation; pyruvate fermentation to lactate; (S)-lactate from pyruvate: step 1/1. Its activity is regulated as follows. Allosterically activated by fructose 1,6-bisphosphate (FBP). Its function is as follows. Catalyzes the conversion of lactate to pyruvate. The polypeptide is L-lactate dehydrogenase 2 (Enterococcus faecalis (strain ATCC 700802 / V583)).